The chain runs to 338 residues: Peroxidase 15 (338 aa).

The N-terminal stretch at 1 to 22 (MARIGSFLIILYLIYALTLCIC) is a signal peptide. 4 disulfides stabilise this stretch: Cys45-Cys125, Cys78-Cys83, Cys131-Cys332, and Cys210-Cys242. His76 serves as the catalytic Proton acceptor. Ca(2+) contacts are provided by Asp77, Val80, Gly82, Asp84, and Ser86. Pro173 is a substrate binding site. Asn176 carries N-linked (GlcNAc...) asparagine glycosylation. His203 serves as a coordination point for heme b. A Ca(2+)-binding site is contributed by Thr204. 2 N-linked (GlcNAc...) asparagine glycosylation sites follow: Asn219 and Asn250. Residues Asp255, Ser258, and Asp263 each contribute to the Ca(2+) site.

Belongs to the peroxidase family. Classical plant (class III) peroxidase subfamily. The cofactor is heme b. It depends on Ca(2+) as a cofactor.

The protein localises to the secreted. The enzyme catalyses 2 a phenolic donor + H2O2 = 2 a phenolic radical donor + 2 H2O. Functionally, removal of H(2)O(2), oxidation of toxic reductants, biosynthesis and degradation of lignin, suberization, auxin catabolism, response to environmental stresses such as wounding, pathogen attack and oxidative stress. These functions might be dependent on each isozyme/isoform in each plant tissue. This Arabidopsis thaliana (Mouse-ear cress) protein is Peroxidase 15 (PER15).